The chain runs to 99 residues: Cytochrome c oxidase subunit 4 isoform 1, mitochondrial (99 aa).

Over 1 to 73 (SVVKREDFSL…TFAEMNRGSN (73 aa)) the chain is Mitochondrial matrix. At Lys4 the chain carries N6-acetyllysine; alternate. Lys4 is modified (N6-succinyllysine; alternate). Lys28 is modified (N6-acetyllysine). A phosphoserine mark is found at Ser31 and Ser33. Lys35 bears the N6-acetyllysine; alternate mark. Lys35 carries the N6-succinyllysine; alternate modification. At Lys42 the chain carries N6-acetyllysine. The helical transmembrane segment at 74–99 (EWKTVVGTATFFIGFTALIIMWQKRY) threads the bilayer.

It belongs to the cytochrome c oxidase IV family. As to quaternary structure, component of the cytochrome c oxidase (complex IV, CIV), a multisubunit enzyme composed of 14 subunits. The complex is composed of a catalytic core of 3 subunits MT-CO1, MT-CO2 and MT-CO3, encoded in the mitochondrial DNA, and 11 supernumerary subunits COX4I, COX5A, COX5B, COX6A, COX6B, COX6C, COX7A, COX7B, COX7C, COX8 and NDUFA4, which are encoded in the nuclear genome. The complex exists as a monomer or a dimer and forms supercomplexes (SCs) in the inner mitochondrial membrane with NADH-ubiquinone oxidoreductase (complex I, CI) and ubiquinol-cytochrome c oxidoreductase (cytochrome b-c1 complex, complex III, CIII), resulting in different assemblies (supercomplex SCI(1)III(2)IV(1) and megacomplex MCI(2)III(2)IV(2)). Interacts with PHB2; the interaction decreases in absence of SPHK2. Interacts with AFG1L. Interacts with ABCB7; this interaction allows the regulation of cellular iron homeostasis and cellular reactive oxygen species (ROS) levels in cardiomyocytes. Interacts with FLVCR2; this interaction occurs in the absence of heme and is disrupted upon heme binding. Interacts with IRGC.

The protein localises to the mitochondrion inner membrane. The protein operates within energy metabolism; oxidative phosphorylation. Component of the cytochrome c oxidase, the last enzyme in the mitochondrial electron transport chain which drives oxidative phosphorylation. The respiratory chain contains 3 multisubunit complexes succinate dehydrogenase (complex II, CII), ubiquinol-cytochrome c oxidoreductase (cytochrome b-c1 complex, complex III, CIII) and cytochrome c oxidase (complex IV, CIV), that cooperate to transfer electrons derived from NADH and succinate to molecular oxygen, creating an electrochemical gradient over the inner membrane that drives transmembrane transport and the ATP synthase. Cytochrome c oxidase is the component of the respiratory chain that catalyzes the reduction of oxygen to water. Electrons originating from reduced cytochrome c in the intermembrane space (IMS) are transferred via the dinuclear copper A center (CU(A)) of subunit 2 and heme A of subunit 1 to the active site in subunit 1, a binuclear center (BNC) formed by heme A3 and copper B (CU(B)). The BNC reduces molecular oxygen to 2 water molecules using 4 electrons from cytochrome c in the IMS and 4 protons from the mitochondrial matrix. The sequence is that of Cytochrome c oxidase subunit 4 isoform 1, mitochondrial (COX4I1) from Trachypithecus cristatus (Silvered leaf-monkey).